The primary structure comprises 559 residues: Urocanate hydratase (559 aa).

Residues 53-54, Gln-131, 177-179, Glu-197, Arg-202, 243-244, 264-268, 274-275, and Tyr-323 each bind NAD(+); these read GG, GMG, NA, QTSAH, and YL. Cys-411 is an active-site residue. Gly-493 provides a ligand contact to NAD(+).

The protein belongs to the urocanase family. It depends on NAD(+) as a cofactor.

The protein localises to the cytoplasm. The catalysed reaction is 4-imidazolone-5-propanoate = trans-urocanate + H2O. Its pathway is amino-acid degradation; L-histidine degradation into L-glutamate; N-formimidoyl-L-glutamate from L-histidine: step 2/3. Its function is as follows. Catalyzes the conversion of urocanate to 4-imidazolone-5-propionate. The sequence is that of Urocanate hydratase from Pseudomonas aeruginosa (strain ATCC 15692 / DSM 22644 / CIP 104116 / JCM 14847 / LMG 12228 / 1C / PRS 101 / PAO1).